A 113-amino-acid chain; its full sequence is Protein NATD1 (113 aa).

Residues 1-16 (MAQSPAAASPGAPEQG) are compositionally biased toward low complexity. Residues 1–20 (MAQSPAAASPGAPEQGCPIR) are disordered. One can recognise an N-acetyltransferase domain in the interval 22–112 (EHDRRRRQFT…PLPQYLERLQ (91 aa)).

It belongs to the NATD1 family.

The protein is Protein NATD1 (NATD1) of Bos taurus (Bovine).